The sequence spans 188 residues: dCTP deaminase (188 aa).

DCTP is bound by residues 111–116, 135–137, Q156, Y170, and Q180; these read KSTYAR and TLE. E137 (proton donor/acceptor) is an active-site residue.

Belongs to the dCTP deaminase family. As to quaternary structure, homotrimer.

It catalyses the reaction dCTP + H2O + H(+) = dUTP + NH4(+). Its pathway is pyrimidine metabolism; dUMP biosynthesis; dUMP from dCTP (dUTP route): step 1/2. Functionally, catalyzes the deamination of dCTP to dUTP. The sequence is that of dCTP deaminase from Pseudomonas syringae pv. tomato (strain ATCC BAA-871 / DC3000).